Consider the following 155-residue polypeptide: Acetylaranotin biosynthesis cluster protein L (155 aa).

Its pathway is mycotoxin biosynthesis. Its function is as follows. Nonribosomal peptide synthetase; part of the gene cluster that mediates the biosynthesis of acetylaranotin, a member of the epipolythiodioxopiperazine (ETP) class of toxins characterized by a disulfide-bridged cyclic dipeptide. The first step of acetylaranotin biosynthesis is performed by the NRPS ataP which produces diketopiperazine cyclo-L-Phe-L-Phe via the condensation of 2 phenylalanines (L-Phe). The ataC domain of ataTC then catalyzes the formation of bishydroxylation of cyclo-L-Phe-L-Phe. The glutathione S-transferase domain ataG in ataIMG further catalyzes the conjugation of two glutathiones to the bishydroxylated intermediate. Next, the dipeptidase ataJ removes the Glu residues. The following step is performed by the carbon sulfur lyase domain ataI of ataIMG which may convert the bis-cysteinyl adduct to yield an epidithiol intermediate. The ataT domain from ataTC then catalyzes the oxidation of the free dithiols, followed by a cyclization step catalyzed by the cytochrome P450 ataF. AtaF probably acts as an epoxidase to promote a dual epoxidation formation at C8 and C9 along with C8' and C9', followed by the spontaneous nucleophilic attack of the amide nitrogens N10 and N10' to yield an intermediate with the pyrrolidine partial structure. The final steps of acetylaranotin biosynthesis involve the acetylation and ring rearrangement of an epitetrathiodiketopiperazine intermediate to produce acetylaranotin. AtaH probably catalyzes the acetylation of epitetrathiodiketopiperazine to produce a diacetate and ataY is responsible for the formation of the dihydrooxepin moiety that converts the diacetate intermediate to acetylaranotin via acetylapoaranotin. Both enzymes could function independently in the absence of the other. The specific function of ataL within the pathway has still to be determined. The acetylaranotin bis-thiomethyltransferase ataS located outside of acetylaranotin gene cluster is the main thiomethyltransferase responsible for converting acetylaranotin and its related intermediates to their methylated forms. In Aspergillus terreus (strain NIH 2624 / FGSC A1156), this protein is Acetylaranotin biosynthesis cluster protein L.